The following is a 673-amino-acid chain: UvrABC system protein B (673 aa).

The Helicase ATP-binding domain maps to 26-183; it reads EGLEDGLAHQ…RRLAELQYTR (158 aa). An ATP-binding site is contributed by 39–46; that stretch reads GVTGSGKT. The Beta-hairpin motif lies at 92–115; it reads YYDYYQPEAYVPSSDTFIEKDASV. Residues 431–597 form the Helicase C-terminal domain; the sequence is QVDDLLSEIR…GLNKKVVDIL (167 aa). A UVR domain is found at 633-668; sequence QQKIHELEGQMMQHAQNLEFEEAAQIRDQLHQLREL.

It belongs to the UvrB family. As to quaternary structure, forms a heterotetramer with UvrA during the search for lesions. Interacts with UvrC in an incision complex.

It localises to the cytoplasm. Its function is as follows. The UvrABC repair system catalyzes the recognition and processing of DNA lesions. A damage recognition complex composed of 2 UvrA and 2 UvrB subunits scans DNA for abnormalities. Upon binding of the UvrA(2)B(2) complex to a putative damaged site, the DNA wraps around one UvrB monomer. DNA wrap is dependent on ATP binding by UvrB and probably causes local melting of the DNA helix, facilitating insertion of UvrB beta-hairpin between the DNA strands. Then UvrB probes one DNA strand for the presence of a lesion. If a lesion is found the UvrA subunits dissociate and the UvrB-DNA preincision complex is formed. This complex is subsequently bound by UvrC and the second UvrB is released. If no lesion is found, the DNA wraps around the other UvrB subunit that will check the other stand for damage. This is UvrABC system protein B from Salmonella heidelberg (strain SL476).